The following is a 47-amino-acid chain: MAVPKKRTSKSKKNLRKSQWKAQAFVQAKKALAKAKTVLKLLLNKDN.

It belongs to the bacterial ribosomal protein bL32 family.

Its subcellular location is the plastid. In Prototheca wickerhamii, this protein is Large ribosomal subunit protein bL32c (rpl32).